We begin with the raw amino-acid sequence, 419 residues long: CinA-like protein (419 aa).

Belongs to the CinA family.

The protein is CinA-like protein of Parasynechococcus marenigrum (strain WH8102).